A 737-amino-acid polypeptide reads, in one-letter code: Zinc finger protein 585A (737 aa).

Residues Met1 to Pro65 enclose the KRAB domain. 6 consecutive C2H2-type zinc fingers follow at residues Tyr126–His148, Phe154–His176, Tyr182–His204, His210–His232, Tyr238–His260, and Tyr266–His288. The C2H2-type 7; degenerate zinc finger occupies Tyr294–Gln316. 15 C2H2-type zinc fingers span residues Ser322–His344, Tyr350–His372, Tyr378–His400, Tyr406–His428, Tyr434–His456, Tyr462–His484, Tyr490–His512, Tyr518–His540, Tyr546–His568, Tyr574–His596, Tyr602–His624, Tyr630–His652, Tyr658–His680, Tyr686–His708, and Tyr714–His736.

Belongs to the krueppel C2H2-type zinc-finger protein family.

Its subcellular location is the nucleus. Functionally, may be involved in transcriptional regulation. The sequence is that of Zinc finger protein 585A (ZNF585A) from Pongo abelii (Sumatran orangutan).